The sequence spans 107 residues: Glutaredoxin 4 (107 aa).

The region spanning 4 to 106 (IEKIERQIKD…KIISNAVLNS (103 aa)) is the Glutaredoxin domain. Glutathione is bound at residue Lys-21. Cys-29 contacts [2Fe-2S] cluster. Residues Arg-58, Phe-70, and 83–84 (CS) each bind glutathione.

This sequence belongs to the glutaredoxin family. Monothiol subfamily. Homodimer.

It is found in the cytoplasm. In terms of biological role, monothiol glutaredoxin involved in the biogenesis of iron-sulfur clusters. This is Glutaredoxin 4 (grxD) from Buchnera aphidicola subsp. Schizaphis graminum (strain Sg).